The following is a 394-amino-acid chain: Probable cytosolic iron-sulfur protein assembly protein 1 (394 aa).

7 WD repeats span residues 10–49 (AHNDKAWCAKSHPTLPLLATASTDRTSHIYNLSAKKNFPL), 56–108 (AHKR…EQDS), 144–184 (GHEN…EEFE), 191–230 (DHQHDVKHITWHPSQNLLASSSYDDTIKLYKQDEDDDDWS), 237–284 (GHGG…TEQI), 313–352 (IHKYAVYSVSWSAKTGKISSTGSDGKLVIYRETESKKWEI), and 359–394 (AHGVYEINSVSWCTLDDKTEVLVTAGDDGAINIWEP).

This sequence belongs to the WD repeat CIA1 family. As to quaternary structure, interacts with NAR1.

The protein resides in the cytoplasm. Its subcellular location is the nucleus. Essential component of the cytosolic iron-sulfur (Fe/S) protein assembly machinery. Required for the maturation of extramitochondrial Fe/S proteins. The sequence is that of Probable cytosolic iron-sulfur protein assembly protein 1 from Debaryomyces hansenii (strain ATCC 36239 / CBS 767 / BCRC 21394 / JCM 1990 / NBRC 0083 / IGC 2968) (Yeast).